We begin with the raw amino-acid sequence, 315 residues long: Calcium homeostasis modulator protein 4 (315 aa).

At 1–14 (MSPDLNCISSSLLR) the chain is on the cytoplasmic side. Residues 15 to 37 (SEPCINSLIAILTVCGQQLFSSY) traverse the membrane as a helical segment. The Extracellular segment spans residues 38 to 48 (TFSCPCQVGKN). 2 disulfides stabilise this stretch: Cys-41–Cys-132 and Cys-43–Cys-163. Residues 49–71 (FYYGSAFLVVPALILLIAGYALR) form a helical membrane-spanning segment. At 72 to 104 (GQMWTVASEYCCCSCTPPYRRSSPLERRLACLM) the chain is on the cytoplasmic side. A helical transmembrane segment spans residues 105–130 (FFDITGRALVAPLTWLTVTLLTGTYY). Residues 131 to 184 (ECAASEFASVDQYPMFANVTPSKREEMLAGFPCYTSAPSDVIPIRDEVALLHRY) lie on the Extracellular side of the membrane. The helical transmembrane segment at 185–208 (QSQMLGWILVVLATIALLLSKCLA) threads the bilayer. The Cytoplasmic segment spans residues 209–315 (RCCSPLTSLQ…DRQEGIEMKP (107 aa)).

It belongs to the CALHM family. As to quaternary structure, oligomerizes to form decameric and undecameric channels. Two hemichannels can assemble in a tail-to-tail manner to form a gap junction.

It is found in the cell membrane. In terms of biological role, may assemble to form gap junction channel-like structures involved in intercellular communication. Channel gating and ion conductance are likely regulated by membrane lipids rather than by membrane depolarization or extracellular calcium levels. This is Calcium homeostasis modulator protein 4 from Mus musculus (Mouse).